Consider the following 191-residue polypeptide: Divergent paired-related homeobox (191 aa).

Basic and acidic residues predominate over residues 1–15 (MPGSEDLRKGKDQMH). A disordered region spans residues 1-20 (MPGSEDLRKGKDQMHSHRKR). Residues 16–75 (SHRKRTMFTKKQLEDLNILFNENPYPNPSLQKEMASKIDIHPTVLQVWFKNHRAKLKKAK) constitute a DNA-binding region (homeobox).

The protein belongs to the paired homeobox family.

The protein localises to the nucleus. In terms of biological role, transcription factor that acts as a repressor. This chain is Divergent paired-related homeobox, found in Homo sapiens (Human).